Reading from the N-terminus, the 497-residue chain is Serine/threonine-protein phosphatase 2A 56 kDa regulatory subunit beta isoform (497 aa).

A compositionally biased stretch (low complexity) spans M1–L19. Disordered regions lie at residues M1–N55 and Q473–S497. A phosphoserine mark is found at S32, S35, S44, S46, S47, and S48. A compositionally biased stretch (basic residues) spans R34–H45.

Belongs to the phosphatase 2A regulatory subunit B56 family. As to quaternary structure, component of the serine/threonine-protein phosphatase 2A complex (PP2A). This complex consists of a common heterodimeric core enzyme, composed of a 36 kDa catalytic subunit (subunit C) and a 65 kDa constant scaffold subunit (PR65 or subunit A), that associates with a variety of regulatory subunits. Proteins that associate with the core dimer include three families of regulatory subunits B (the R2/B/PR55/B55, R3/B''/PR72/PR130/PR59 and R5/B'/B56 families), the 48 kDa variable regulatory subunit, viral proteins, and cell signaling molecules. Interacts with SGO1. Interacts with AKT1. In terms of processing, ubiquitinated by CUL3-KLHL15 complex; this modification leads to proteasomal degradation. In terms of tissue distribution, widely expressed at the mRNA level, with highest levels in cerebellum and lung.

It is found in the cytoplasm. Its function is as follows. As the regulatory component of the serine/threonine-protein phosphatase 2A (PP2A) holoenzyme, modulates substrate specificity, subcellular localization, and responsiveness to phosphorylation. The phosphorylated form mediates the interaction between PP2A and AKT1, leading to AKT1 dephosphorylation. In Rattus norvegicus (Rat), this protein is Serine/threonine-protein phosphatase 2A 56 kDa regulatory subunit beta isoform (Ppp2r5b).